We begin with the raw amino-acid sequence, 152 residues long: Neuromedin-S (152 aa).

The first 26 residues, 1 to 26 (MKHPFPQFPPILVIYCFCMLQIPSSG), serve as a signal peptide directing secretion. 3 consecutive propeptides follow at residues 27–69 (ASPP…VYKR), 70–105 (FLFH…PSRR), and 106–108 (MKR). Asparagine amide is present on Asn-144. Residues 147–152 (YTDKVQ) constitute a propeptide that is removed on maturation.

This sequence belongs to the NmU family. As to expression, expressed in the CNS, spleen and testis. Specifically expressed in the suprachiasmatic nuclei (SCN) of the hypothalamus.

It localises to the secreted. Functionally, implicated in the regulation of circadian rhythms through autocrine and/or paracrine actions. Stimulates the contraction of rectum and elevation of blood pressure. The protein is Neuromedin-S (Nms) of Rattus norvegicus (Rat).